The sequence spans 458 residues: L-hydantoinase (458 aa).

Zn(2+) contacts are provided by His-60, His-62, Lys-147, His-183, His-239, and Asp-312. Residue Lys-147 is modified to N6-carboxylysine.

In terms of assembly, homotetramer. Zn(2+) serves as cofactor. In terms of processing, carboxylation allows a single lysine to coordinate two zinc ions.

In terms of biological role, rather more predominant for the cleavage of aryl- than for alkyl-hydantoin derivatives. The stereoselectivity of this enzyme depends on the substrate used for bioconversion: strictly L-selective for the cleavage of D,L-5-indolylmethylhydantoin, but D-selective for the hydrolysis of D,L-methylthioethylhydantoin. The protein is L-hydantoinase (lhyD) of Paenarthrobacter aurescens (Arthrobacter aurescens).